The chain runs to 306 residues: tRNA dimethylallyltransferase (306 aa).

An ATP-binding site is contributed by 14 to 21 (GPTAAGKS). 16 to 21 (TAAGKS) serves as a coordination point for substrate. The interval 39–42 (DSRL) is interaction with substrate tRNA.

The protein belongs to the IPP transferase family. As to quaternary structure, monomer. Requires Mg(2+) as cofactor.

The enzyme catalyses adenosine(37) in tRNA + dimethylallyl diphosphate = N(6)-dimethylallyladenosine(37) in tRNA + diphosphate. Functionally, catalyzes the transfer of a dimethylallyl group onto the adenine at position 37 in tRNAs that read codons beginning with uridine, leading to the formation of N6-(dimethylallyl)adenosine (i(6)A). The polypeptide is tRNA dimethylallyltransferase (Synechococcus elongatus (strain ATCC 33912 / PCC 7942 / FACHB-805) (Anacystis nidulans R2)).